The following is a 242-amino-acid chain: Ribonuclease PH (242 aa).

Phosphate contacts are provided by residues Arg-89 and 127 to 129 (GTR).

Belongs to the RNase PH family. As to quaternary structure, homohexameric ring arranged as a trimer of dimers.

The enzyme catalyses tRNA(n+1) + phosphate = tRNA(n) + a ribonucleoside 5'-diphosphate. Phosphorolytic 3'-5' exoribonuclease that plays an important role in tRNA 3'-end maturation. Removes nucleotide residues following the 3'-CCA terminus of tRNAs; can also add nucleotides to the ends of RNA molecules by using nucleoside diphosphates as substrates, but this may not be physiologically important. Probably plays a role in initiation of 16S rRNA degradation (leading to ribosome degradation) during starvation. The sequence is that of Ribonuclease PH from Neisseria meningitidis serogroup A / serotype 4A (strain DSM 15465 / Z2491).